The following is a 320-amino-acid chain: 4-hydroxy-3-methylbut-2-enyl diphosphate reductase (320 aa).

A [4Fe-4S] cluster-binding site is contributed by Cys-13. (2E)-4-hydroxy-3-methylbut-2-enyl diphosphate contacts are provided by His-41 and His-75. Dimethylallyl diphosphate-binding residues include His-41 and His-75. Positions 41 and 75 each coordinate isopentenyl diphosphate. A [4Fe-4S] cluster-binding site is contributed by Cys-97. (2E)-4-hydroxy-3-methylbut-2-enyl diphosphate is bound at residue His-125. His-125 is a binding site for dimethylallyl diphosphate. His-125 is a binding site for isopentenyl diphosphate. The active-site Proton donor is the Glu-127. Thr-168 contributes to the (2E)-4-hydroxy-3-methylbut-2-enyl diphosphate binding site. Cys-225 is a [4Fe-4S] cluster binding site. 4 residues coordinate (2E)-4-hydroxy-3-methylbut-2-enyl diphosphate: Ser-253, Ser-254, Asn-255, and Ser-302. Positions 253, 254, 255, and 302 each coordinate dimethylallyl diphosphate. Positions 253, 254, 255, and 302 each coordinate isopentenyl diphosphate.

This sequence belongs to the IspH family. [4Fe-4S] cluster is required as a cofactor.

The enzyme catalyses isopentenyl diphosphate + 2 oxidized [2Fe-2S]-[ferredoxin] + H2O = (2E)-4-hydroxy-3-methylbut-2-enyl diphosphate + 2 reduced [2Fe-2S]-[ferredoxin] + 2 H(+). It carries out the reaction dimethylallyl diphosphate + 2 oxidized [2Fe-2S]-[ferredoxin] + H2O = (2E)-4-hydroxy-3-methylbut-2-enyl diphosphate + 2 reduced [2Fe-2S]-[ferredoxin] + 2 H(+). The protein operates within isoprenoid biosynthesis; dimethylallyl diphosphate biosynthesis; dimethylallyl diphosphate from (2E)-4-hydroxy-3-methylbutenyl diphosphate: step 1/1. Its pathway is isoprenoid biosynthesis; isopentenyl diphosphate biosynthesis via DXP pathway; isopentenyl diphosphate from 1-deoxy-D-xylulose 5-phosphate: step 6/6. Its function is as follows. Catalyzes the conversion of 1-hydroxy-2-methyl-2-(E)-butenyl 4-diphosphate (HMBPP) into a mixture of isopentenyl diphosphate (IPP) and dimethylallyl diphosphate (DMAPP). Acts in the terminal step of the DOXP/MEP pathway for isoprenoid precursor biosynthesis. This Chlorobium luteolum (strain DSM 273 / BCRC 81028 / 2530) (Pelodictyon luteolum) protein is 4-hydroxy-3-methylbut-2-enyl diphosphate reductase.